We begin with the raw amino-acid sequence, 701 residues long: T-cell immunomodulatory protein homolog (701 aa).

Residues 1-29 (MVKCGKYVLILELLLLTLLYNLIKRVSNS) form the signal peptide. Residues 30–657 (GETVSSFVDG…IQLSVNPSNK (628 aa)) are Extracellular-facing. Residues asparagine 148, asparagine 180, asparagine 217, asparagine 258, asparagine 458, asparagine 522, and asparagine 571 are each glycosylated (N-linked (GlcNAc...) asparagine). Residues 658–678 (FYSIIYITLICLSVIGVLIFI) form a helical membrane-spanning segment. Topologically, residues 679–701 (LDRKEKIEDSKEEMGFKSHFVIG) are cytoplasmic.

This sequence belongs to the TIP family.

The protein resides in the membrane. In terms of biological role, may protect the parasite against attack by the host immune system by immunomodulation. The polypeptide is T-cell immunomodulatory protein homolog (Plasmodium yoelii yoelii).